The sequence spans 128 residues: Glycine cleavage system H protein 2 (128 aa).

The Lipoyl-binding domain maps to 24 to 105 (TVTVGISDHA…PYSAWIFKVK (82 aa)). Position 65 is an N6-lipoyllysine (Lys-65).

It belongs to the GcvH family. As to quaternary structure, the glycine cleavage system is composed of four proteins: P, T, L and H. It depends on (R)-lipoate as a cofactor.

The glycine cleavage system catalyzes the degradation of glycine. The H protein shuttles the methylamine group of glycine from the P protein to the T protein. This is Glycine cleavage system H protein 2 from Pseudomonas syringae pv. tomato (strain ATCC BAA-871 / DC3000).